A 207-amino-acid chain; its full sequence is Abscisic acid receptor PYL4 (207 aa).

Residues 45–195 (HEVGPNQCCS…NLQSLAKIAE (151 aa)) form an START-like region. Cys-52 and Cys-176 are joined by a disulfide. Abscisate is bound by residues Lys-81, 111–116 (AASSTE), 138–144 (RLSNYRS), and Glu-160. The short motif at 107 to 111 (SGLPA) is the Gate loop element. A Latch loop motif is present at residues 137–139 (HRL).

This sequence belongs to the PYR/PYL/RCAR abscisic acid intracellular receptor family. Monomer. Homodimer. Binds ABA on one subunit only. Interacts with HAB1, ABI1 and ABI2, and possibly with other PP2Cs. Binds to CARs protein in an ABA-independent manner, both at the plasma membrane and in the nucleus. Interacts directly with CAR1 and CAR4. Interacts with TOPP1. Interacts with DDA1. Interacts with FREE1 (via N-terminus). Interacts with the E3 ubiquitin-protein ligase RSL1 at the plasma membrane. Post-translationally, ubiquitynated and degraded by the proteasome upon binding to the E3 ubiquitin-protein ligase RSL1 at the plasma membrane.

The protein resides in the cytoplasm. It is found in the nucleus. The protein localises to the cell membrane. It localises to the vacuole. Receptor for abscisic acid (ABA) required for ABA-mediated responses such as stomatal closure and germination inhibition. Inhibits the activity of group-A protein phosphatases type 2C (PP2Cs) when activated by ABA. Can be activated by both (-)-ABA and (+)-ABA. In Arabidopsis thaliana (Mouse-ear cress), this protein is Abscisic acid receptor PYL4.